Reading from the N-terminus, the 221-residue chain is Imidazoleglycerol-phosphate dehydratase (221 aa).

The protein belongs to the imidazoleglycerol-phosphate dehydratase family.

It carries out the reaction D-erythro-1-(imidazol-4-yl)glycerol 3-phosphate = 3-(imidazol-4-yl)-2-oxopropyl phosphate + H2O. It participates in amino-acid biosynthesis; L-histidine biosynthesis; L-histidine from 5-phospho-alpha-D-ribose 1-diphosphate: step 6/9. The polypeptide is Imidazoleglycerol-phosphate dehydratase (HIS3) (Kluyveromyces marxianus (Yeast)).